A 365-amino-acid chain; its full sequence is UDP-N-acetylglucosamine--N-acetylmuramyl-(pentapeptide) pyrophosphoryl-undecaprenol N-acetylglucosamine transferase (365 aa).

UDP-N-acetyl-alpha-D-glucosamine contacts are provided by residues 10-12 (TGG), Asn128, Arg170, Ser199, Ile250, and Gln295.

This sequence belongs to the glycosyltransferase 28 family. MurG subfamily.

The protein localises to the cell inner membrane. The catalysed reaction is di-trans,octa-cis-undecaprenyl diphospho-N-acetyl-alpha-D-muramoyl-L-alanyl-D-glutamyl-meso-2,6-diaminopimeloyl-D-alanyl-D-alanine + UDP-N-acetyl-alpha-D-glucosamine = di-trans,octa-cis-undecaprenyl diphospho-[N-acetyl-alpha-D-glucosaminyl-(1-&gt;4)]-N-acetyl-alpha-D-muramoyl-L-alanyl-D-glutamyl-meso-2,6-diaminopimeloyl-D-alanyl-D-alanine + UDP + H(+). The protein operates within cell wall biogenesis; peptidoglycan biosynthesis. Cell wall formation. Catalyzes the transfer of a GlcNAc subunit on undecaprenyl-pyrophosphoryl-MurNAc-pentapeptide (lipid intermediate I) to form undecaprenyl-pyrophosphoryl-MurNAc-(pentapeptide)GlcNAc (lipid intermediate II). This chain is UDP-N-acetylglucosamine--N-acetylmuramyl-(pentapeptide) pyrophosphoryl-undecaprenol N-acetylglucosamine transferase, found in Pelodictyon phaeoclathratiforme (strain DSM 5477 / BU-1).